A 260-amino-acid polypeptide reads, in one-letter code: Cell division protein DivIB (260 aa).

Over 1-25 the chain is Cytoplasmic; sequence MGAQDQNGKNHGGLFRDFQNRNVKK. A helical transmembrane segment spans residues 26 to 46; sequence MWPLVMPITIILLVMIFMISS. Over 47–260 the chain is Extracellular; sequence YSRVKKVTVS…STKTTSVQGY (214 aa). Residues 48–119 form the POTRA domain; the sequence is SRVKKVTVSG…NQVKIKVEEY (72 aa).

This sequence belongs to the FtsQ/DivIB family. DivIB subfamily.

Its subcellular location is the cell membrane. In terms of biological role, cell division protein that may be involved in stabilizing or promoting the assembly of the division complex. This Lentilactobacillus buchneri (strain NRRL B-30929) (Lactobacillus buchneri) protein is Cell division protein DivIB.